Here is a 224-residue protein sequence, read N- to C-terminus: Menaquinol:cytochrome c reductase cytochrome b subunit (224 aa).

A helical membrane pass occupies residues 37–57; the sequence is FSAFVYCFGGLTFFVTVIQIL. Tyrosine 42 is a heme b binding site. Cysteine 43 serves as a coordination point for heme c. Positions 91, 94, 108, and 111 each coordinate heme b. 3 helical membrane passes run 96–116, 126–146, and 195–215; these read WGAS…FFQG, WIVG…GYLL, and IHVF…FLMI. Heme b contacts are provided by histidine 196 and histidine 211. 2 residues coordinate heme c: arginine 216 and isoleucine 220. Serine 221 serves as a coordination point for heme b.

This sequence belongs to the cytochrome b family. The main subunits of the menaquinol:cytochrome c complex are a Rieske-type iron-sulfur protein (QcrA), a cytochrome b (QcrB) and a cytochrome c (QcrC). The cofactor is heme b. Heme c serves as cofactor.

The protein localises to the cell membrane. Component of the menaquinol:cytochrome c reductase complex. The polypeptide is Menaquinol:cytochrome c reductase cytochrome b subunit (qcrB) (Geobacillus thermodenitrificans).